Reading from the N-terminus, the 211-residue chain is Molybdenum cofactor guanylyltransferase (211 aa).

GTP-binding positions include 12–14 (LAG), lysine 25, asparagine 55, aspartate 73, and aspartate 103. Aspartate 103 contributes to the Mg(2+) binding site.

It belongs to the MobA family. As to quaternary structure, monomer. It depends on Mg(2+) as a cofactor.

The protein resides in the cytoplasm. It catalyses the reaction Mo-molybdopterin + GTP + H(+) = Mo-molybdopterin guanine dinucleotide + diphosphate. Transfers a GMP moiety from GTP to Mo-molybdopterin (Mo-MPT) cofactor (Moco or molybdenum cofactor) to form Mo-molybdopterin guanine dinucleotide (Mo-MGD) cofactor. This chain is Molybdenum cofactor guanylyltransferase, found in Albidiferax ferrireducens (strain ATCC BAA-621 / DSM 15236 / T118) (Rhodoferax ferrireducens).